The following is a 398-amino-acid chain: ASPTSPKVFPLSLCSTQPDGNVVIACLVQGFFPQEPLSVTWSESGQGVTARNFPPSQDASGDLYTTSSQLTLPATQCLAGKSVTCHVKHYTNPSQDVTVPCPVPSTPPTPSPSTPPTPSPSCCHPRLSLHRPALEDLLLGSEANLTCTLTGLRDASGVTFTWTPSSGKSAVQGPPERDLCGCYSVSSVLPGCAEPWNHGKTFTCTAAYPESKTPLTATLSKSGNTFRPEVHLLPPPSEELALNELVTLTCLARGFSPKDVLVRWLQGSQELPREKYLTWASRQEPSQGTTTFAVTSILRVAAEDWKKGDTFSCMVGHEALPLAFTQKTIDRLADWQMPPPYVVLDLPQETLEEETPGANLWPTTITFLTLFLLSLFYSTALTVTSVRGPSGNREGPQY.

Over 1–364 (ASPTSPKVFP…TPGANLWPTT (364 aa)) the chain is Extracellular. The 93-residue stretch at 6–98 (PKVFPLSLCS…HYTNPSQDVT (93 aa)) folds into the Ig-like 1 domain. Disulfide bonds link cysteine 26–cysteine 85 and cysteine 77–cysteine 101. Residues 96–122 (DVTVPCPVPSTPPTPSPSTPPTPSPSC) form a disordered region. Residues 101–119 (CPVPSTPPTPSPSTPPTPS) are compositionally biased toward pro residues. An O-linked (GalNAc...) serine glycan is attached at serine 105. Residues threonine 106 and threonine 109 are each glycosylated (O-linked (GalNAc...) threonine). Residues serine 111 and serine 113 are each glycosylated (O-linked (GalNAc...) serine). 2 O-linked (GalNAc...) threonine glycosylation sites follow: threonine 114 and threonine 117. O-linked (GalNAc...) serine glycans are attached at residues serine 119 and serine 121. 3 cysteine pairs are disulfide-bonded: cysteine 123-cysteine 180, cysteine 147-cysteine 204, and cysteine 250-cysteine 313. Ig-like domains lie at 125–220 (PRLS…ATLS) and 228–330 (PEVH…KTID). An N-linked (GlcNAc...) (complex) asparagine glycan is attached at asparagine 144. Residue proline 340 is glycosylated (N-linked (GlcNAc...) (complex) asparagine). A 3-hydroxy-L-kynurenine-binding site is contributed by glutamate 352. The chain crosses the membrane as a helical span at residues 365 to 383 (ITFLTLFLLSLFYSTALTV). Residues 384–398 (TSVRGPSGNREGPQY) lie on the Cytoplasmic side of the membrane.

As to quaternary structure, immunoglobulins are composed of two identical heavy chains and two identical light chains; disulfide-linked. Monomeric or polymeric. Part of the secretory IgA (sIgA) complex that consists of two, four or five IgA monomers, and two additional non-Ig polypeptides, namely the JCHAIN and the secretory component (the proteolytic product of PIGR). 3-Hydroxykynurenine, an oxidized tryptophan metabolite that is common in biological fluids, reacts with alpha-1-microglobulin to form heterogeneous polycyclic chromophores including hydroxanthommatin. The chromophore reacts with accessible cysteines forming non-reducible thioether cross-links with Ig alpha-1 chain C region Cys-352. In terms of processing, N- and O-glycosylated. N-glycan at Asn-144: Hex5HexNAc4.

Its subcellular location is the secreted. The protein localises to the cell membrane. Functionally, constant region of immunoglobulin heavy chains. Immunoglobulins, also known as antibodies, are membrane-bound or secreted glycoproteins produced by B lymphocytes. In the recognition phase of humoral immunity, the membrane-bound immunoglobulins serve as receptors which, upon binding of a specific antigen, trigger the clonal expansion and differentiation of B lymphocytes into immunoglobulins-secreting plasma cells. Secreted immunoglobulins mediate the effector phase of humoral immunity, which results in the elimination of bound antigens. The antigen binding site is formed by the variable domain of one heavy chain, together with that of its associated light chain. Thus, each immunoglobulin has two antigen binding sites with remarkable affinity for a particular antigen. The variable domains are assembled by a process called V-(D)-J rearrangement and can then be subjected to somatic hypermutations which, after exposure to antigen and selection, allow affinity maturation for a particular antigen. Ig alpha is the major immunoglobulin class in body secretions. This is Immunoglobulin heavy constant alpha 1 from Homo sapiens (Human).